The sequence spans 300 residues: ATP synthase gamma chain (300 aa).

The protein belongs to the ATPase gamma chain family. As to quaternary structure, F-type ATPases have 2 components, CF(1) - the catalytic core - and CF(0) - the membrane proton channel. CF(1) has five subunits: alpha(3), beta(3), gamma(1), delta(1), epsilon(1). CF(0) has three main subunits: a, b and c.

The protein localises to the cell membrane. In terms of biological role, produces ATP from ADP in the presence of a proton gradient across the membrane. The gamma chain is believed to be important in regulating ATPase activity and the flow of protons through the CF(0) complex. The protein is ATP synthase gamma chain of Acidothermus cellulolyticus (strain ATCC 43068 / DSM 8971 / 11B).